Here is an 858-residue protein sequence, read N- to C-terminus: M-phase phosphoprotein 8 (858 aa).

A disordered region spans residues 18-55 (VPDSIGRSPESEGVGAGDEEKDAATKGTVAVGDSEEDG). Residues Ser51, Ser85, Ser136, and Ser138 each carry the phosphoserine modification. Residues 59–118 (FEVERILDMKCEGGKNLYKVRWKGYTSEDDTWEPEVHLEDCKEVLLEFRKKLAENKAKAV) enclose the Chromo domain. The interval 80-87 (WKGYTSED) is histone H3K9me3 binding. The segment at 129–175 (NDIFEADSDSDQQSDTKEDISPRKKKKKIKCKEETSPEDLRKKRTKM) is disordered. Thr144 carries the post-translational modification Phosphothreonine. Phosphoserine; by CDK1 is present on residues Ser149 and Ser164. Residues 159 to 169 (CKEETSPEDLR) show a composition bias toward basic and acidic residues. The residue at position 188 (Ser188) is a Phosphoserine. 2 disordered regions span residues 209 to 234 (ELKD…NKRA) and 250 to 300 (NRKT…DKTA). A phosphoserine mark is found at Ser267, Ser271, and Ser278. Residues 273–282 (ILEDDSEDFI) show a composition bias toward acidic residues. Positions 283 to 300 (SDNREENQNVRSVRDKTA) are enriched in basic and acidic residues. Ser318 is subject to Phosphoserine. The segment at 321–431 (EDAGTRVRRK…YDLDKEEKAR (111 aa)) is disordered. Over residues 335-357 (RKFEEPKEIKKLESTNAFLERRA) the composition is skewed to basic and acidic residues. A Phosphothreonine; by CDK1 modification is found at Thr385. Ser392 and Ser400 each carry phosphoserine. Over residues 407 to 431 (EKEKKNEPKGKYQKRYDLDKEEKAR) the composition is skewed to basic and acidic residues. Thr453 carries the post-translational modification Phosphothreonine. ANK repeat units follow at residues 598 to 627 (TGMT…KVNG), 631 to 660 (NGTT…FVNV), 664 to 693 (NGET…DCNI), and 697 to 726 (HQNS…TLSR).

In terms of assembly, homodimer. Interacts (via chromo domain) with histone H3K9me3. Has the highest affinity for H3K9me3, and lesser affinity for H3K9me2 and H3K9me1. Component of the HUSH complex; at least composed of TASOR, PPHLN1 and MPHOSPH8. Interacts with DNMT3, EHMT1 and SETDB1. Interacts with MORC2; the interaction associateS MORC2 with the HUSH complex which recruits MORC2 to heterochromatic loci. Interacts with ZNF638; leading to recruitment of the HUSH complex to unintegrated retroviral DNA. Interacts with TASOR. In terms of processing, phosphorylated in M (mitotic) phase. Phosphorylation by CDK1 promotes dissociation from chromatin. In terms of tissue distribution, expressed in the spermatogonia, spermatocytes and granular cells within the cerebellum.

Its subcellular location is the nucleus. It localises to the chromosome. Functionally, heterochromatin component that specifically recognizes and binds methylated 'Lys-9' of histone H3 (H3K9me) and promotes recruitment of proteins that mediate epigenetic repression. Mediates recruitment of the HUSH complex to H3K9me3 sites: the HUSH complex is recruited to genomic loci rich in H3K9me3 and is required to maintain transcriptional silencing by promoting recruitment of SETDB1, a histone methyltransferase that mediates further deposition of H3K9me3, as well as MORC2. Binds H3K9me and promotes DNA methylation by recruiting DNMT3A to target CpG sites; these can be situated within the coding region of the gene. Mediates down-regulation of CDH1 expression. Also represses L1 retrotransposons in collaboration with MORC2 and, probably, SETDB1, the silencing is dependent of repressive epigenetic modifications, such as H3K9me3 mark. Silencing events often occur within introns of transcriptionally active genes, and lead to the down-regulation of host gene expression. The HUSH complex is also involved in the silencing of unintegrated retroviral DNA by being recruited by ZNF638: some part of the retroviral DNA formed immediately after infection remains unintegrated in the host genome and is transcriptionally repressed. The chain is M-phase phosphoprotein 8 from Mus musculus (Mouse).